The following is a 211-amino-acid chain: MAEQHGAPEQAAAGKSHGDLGGSYKVILYELENFQGKRCELSAECPSLTDSLLEKVGSIQVESGPWLAFESRAFRGEQFVLEKGDYPRWDAWSNSRDSDSLLSLRPLNIDSPHHKLHLFENPAFSGRKMEIVDDDVPSLWAHGFQDRVASVRAINGTWVGYEFPGYRGRQYVFERGEYRHWNEWDASQPQLQSVRRIRDQKWHKRGRFPSS.

The residue at position 1 (Met1) is an N-acetylmethionine. Residue Ala2 is modified to N-acetylalanine; in Beta-crystallin B3, N-terminally processed. Residues Ala2–Ser23 form an N-terminal arm region. Beta/gamma crystallin 'Greek key' domains are found at residues Tyr24 to Ser63 and Gly64 to Asn108. Positions Ile109 to His113 are connecting peptide. 2 consecutive Beta/gamma crystallin 'Greek key' domains span residues His114 to Asn155 and Gly156 to Arg198. The segment at Gln200–Ser211 is C-terminal arm.

The protein belongs to the beta/gamma-crystallin family. As to quaternary structure, homo/heterodimer, or complexes of higher-order. The structure of beta-crystallin oligomers seems to be stabilized through interactions between the N-terminal arms.

In terms of biological role, crystallins are the dominant structural components of the vertebrate eye lens. The protein is Beta-crystallin B3 (CRYBB3) of Homo sapiens (Human).